Here is a 339-residue protein sequence, read N- to C-terminus: tRNA-splicing endonuclease (339 aa).

Residues Tyr274, His285, and Lys316 contribute to the active site.

Belongs to the tRNA-intron endonuclease family. Archaeal long subfamily. In terms of assembly, homodimer. Ca(2+) serves as cofactor. Requires Mg(2+) as cofactor. The N-terminus is blocked.

The catalysed reaction is pretRNA = a 3'-half-tRNA molecule with a 5'-OH end + a 5'-half-tRNA molecule with a 2',3'-cyclic phosphate end + an intron with a 2',3'-cyclic phosphate and a 5'-hydroxyl terminus.. Functionally, endonuclease that removes tRNA introns. Cleaves pre-tRNA at the 5'- and 3'-splice sites to release the intron. The products are an intron and two tRNA half-molecules bearing 2',3' cyclic phosphate and 5'-OH termini. Recognizes a pseudosymmetric substrate in which 2 bulged loops of 3 bases are separated by a stem of 4 bp. This is tRNA-splicing endonuclease from Haloferax volcanii (strain ATCC 29605 / DSM 3757 / JCM 8879 / NBRC 14742 / NCIMB 2012 / VKM B-1768 / DS2) (Halobacterium volcanii).